Reading from the N-terminus, the 341-residue chain is uncharacterized protein (341 aa).

3 helical membrane-spanning segments follow: residues 6-26 (IIAG…TTLW), 63-83 (LLLC…WVLI), and 137-157 (AQGL…LSAV).

It is found in the cell membrane. This is an uncharacterized protein from Bacillus subtilis (strain 168).